A 334-amino-acid chain; its full sequence is Putative transport protein MJ1177 (334 aa).

The next 7 helical transmembrane spans lie at 13–33, 61–81, 138–158, 191–211, 234–254, 259–279, and 293–313; these read VIVG…DVLA, LAIS…LLTF, IIDV…TFYF, SYKN…ILSY, LLPI…FFLI, KAVF…DFVI, and VLVV…GFAI.

It belongs to the autoinducer-2 exporter (AI-2E) (TC 2.A.86) family.

Its subcellular location is the cell membrane. The polypeptide is Putative transport protein MJ1177 (Methanocaldococcus jannaschii (strain ATCC 43067 / DSM 2661 / JAL-1 / JCM 10045 / NBRC 100440) (Methanococcus jannaschii)).